The following is a 263-amino-acid chain: Transcription factor 19-like protein (263 aa).

One can recognise an FHA domain in the interval 31–88 (YGLGCRADLCDVALRPQQEPGLISGVHAELHAELQGDDWRVSLEDHSSQGTLVNNVRL). Position 78 is a phosphoserine (serine 78). Disordered stretches follow at residues 140–164 (SKGE…PLST) and 189–225 (LTFS…RKSA).

It is found in the nucleus. In terms of biological role, potential transcription factor that may play a role in the regulation of genes involved in cell cycle G1/S transition. May bind to regulatory elements of genes, including the promoter of the transcription factor FOXO1. The sequence is that of Transcription factor 19-like protein (Tcf19) from Mus musculus (Mouse).